The primary structure comprises 156 residues: Snaclec A11 (156 aa).

Residues methionine 1 to alanine 23 form the signal peptide. 3 disulfide bridges follow: cysteine 27-cysteine 38, cysteine 55-cysteine 154, and cysteine 129-cysteine 146. The region spanning tyrosine 34–glutamate 155 is the C-type lectin domain.

This sequence belongs to the snaclec family. As to quaternary structure, heterodimer; disulfide-linked. As to expression, expressed by the venom gland.

Its subcellular location is the secreted. Interferes with one step of hemostasis (modulation of platelet aggregation, or coagulation cascade, for example). This is Snaclec A11 from Macrovipera lebetinus (Levantine viper).